We begin with the raw amino-acid sequence, 71 residues long: ATP synthase subunit c (71 aa).

Helical transmembrane passes span 4-24 and 48-68; these read AVIG…GIGI and IIGA…AFMI.

Belongs to the ATPase C chain family. In terms of assembly, F-type ATPases have 2 components, F(1) - the catalytic core - and F(0) - the membrane proton channel. F(1) has five subunits: alpha(3), beta(3), gamma(1), delta(1), epsilon(1). F(0) has three main subunits: a(1), b(2) and c(10-14). The alpha and beta chains form an alternating ring which encloses part of the gamma chain. F(1) is attached to F(0) by a central stalk formed by the gamma and epsilon chains, while a peripheral stalk is formed by the delta and b chains.

The protein resides in the cell membrane. Its function is as follows. F(1)F(0) ATP synthase produces ATP from ADP in the presence of a proton or sodium gradient. F-type ATPases consist of two structural domains, F(1) containing the extramembraneous catalytic core and F(0) containing the membrane proton channel, linked together by a central stalk and a peripheral stalk. During catalysis, ATP synthesis in the catalytic domain of F(1) is coupled via a rotary mechanism of the central stalk subunits to proton translocation. In terms of biological role, key component of the F(0) channel; it plays a direct role in translocation across the membrane. A homomeric c-ring of between 10-14 subunits forms the central stalk rotor element with the F(1) delta and epsilon subunits. The chain is ATP synthase subunit c from Clostridium botulinum (strain Alaska E43 / Type E3).